Consider the following 124-residue polypeptide: UPF0482 protein YPK_1977 (124 aa).

Positions 1–32 are cleaved as a signal peptide; the sequence is MMKINNLPRLIRAFLPATLLMLPLVWQTPALA. The tract at residues 47–69 is disordered; it reads GGNNDPMSKEQARQSQQQWDETN.

This sequence belongs to the UPF0482 family.

This is UPF0482 protein YPK_1977 from Yersinia pseudotuberculosis serotype O:3 (strain YPIII).